The primary structure comprises 453 residues: Choline kinase alpha (453 aa).

Residues cysteine 22–proline 81 are disordered. The span at alanine 55–proline 73 shows a compositional bias: pro residues. Serine 71 is modified (phosphoserine). ATP-binding positions include arginine 113 to methionine 119, arginine 142, and glutamine 203 to arginine 209. Position 115–117 (glycine 115–serine 117) interacts with phosphocholine. An N6-acetyllysine modification is found at lysine 243. Residue serine 275 is modified to Phosphoserine. ATP contacts are provided by glutamine 304 and aspartate 326.

Belongs to the choline/ethanolamine kinase family. Heterodimer with CHKB. Homodimer. In terms of assembly, monomer; acetylation by KAT5 promotes dissociation of the homodimer and monomerization. In terms of processing, phosphorylated at Ser-275 by AMPK in response to glucose deprivation, leading to localization to lipid droplets. Acetylated by KAT5 at Lys-243 following phosphorylation by AMPK, leading to monomerization and conversion into a tyrosine-protein kinase. As to expression, testis, brain, lung, kidney and liver.

The protein localises to the cytoplasm. Its subcellular location is the cytosol. It localises to the lipid droplet. The enzyme catalyses choline + ATP = phosphocholine + ADP + H(+). The catalysed reaction is ethanolamine + ATP = phosphoethanolamine + ADP + H(+). It catalyses the reaction L-tyrosyl-[protein] + ATP = O-phospho-L-tyrosyl-[protein] + ADP + H(+). The protein operates within phospholipid metabolism; phosphatidylcholine biosynthesis; phosphocholine from choline: step 1/1. Its pathway is phospholipid metabolism; phosphatidylethanolamine biosynthesis; phosphatidylethanolamine from ethanolamine: step 1/3. Its function is as follows. Plays a key role in phospholipid biosynthesis by catalyzing the phosphorylation of free choline to phosphocholine, the first step in phosphatidylcholine biosynthesis. Also phosphorylates ethanolamine, thereby contributing to phosphatidylethanolamine biosynthesis. Has higher activity with choline. Functionally, this isoform plays a key role in lipolysis of lipid droplets following glucose deprivation. In response to glucose deprivation, phosphorylated by AMPK, promoting localization to lipid droplets. Phosphorylation is followed by acetylation by KAT5, leading to dissociation of the homodimer into a monomer. Monomeric CHKA isoform 1 is converted into a tyrosine-protein kinase, which phosphorylates lipid droplet structural proteins PLIN2 and PLIN3, leading to lipolysis of lipid droplets. In Rattus norvegicus (Rat), this protein is Choline kinase alpha (Chka).